We begin with the raw amino-acid sequence, 232 residues long: Flavin-dependent thymidylate synthase (232 aa).

The region spanning M1 to G204 is the ThyX domain. Residues S55, R79–R81, and Q87 each bind FAD. DUMP-binding positions include Q76 to R79, Q87 to R91, and R143. The short motif at R79–S89 is the ThyX motif element. FAD-binding positions include N159–R161 and H165. DUMP is bound at residue R170. The active-site Involved in ionization of N3 of dUMP, leading to its activation is the R170.

It belongs to the thymidylate synthase ThyX family. Homotetramer. FAD serves as cofactor.

The catalysed reaction is dUMP + (6R)-5,10-methylene-5,6,7,8-tetrahydrofolate + NADPH + H(+) = dTMP + (6S)-5,6,7,8-tetrahydrofolate + NADP(+). It participates in pyrimidine metabolism; dTTP biosynthesis. Functionally, catalyzes the reductive methylation of 2'-deoxyuridine-5'-monophosphate (dUMP) to 2'-deoxythymidine-5'-monophosphate (dTMP) while utilizing 5,10-methylenetetrahydrofolate (mTHF) as the methyl donor, and NADPH and FADH(2) as the reductant. The chain is Flavin-dependent thymidylate synthase from Geobacter sulfurreducens (strain ATCC 51573 / DSM 12127 / PCA).